We begin with the raw amino-acid sequence, 193 residues long: Transcriptional activator GvpE2 (193 aa).

Position 143–148 (143–148 (KRKVYR)) interacts with DNA. A leucine-zipper region spans residues 153 to 184 (QAAIEHVDSVVLQLLTFAVGLQTIMADCIVNQ).

Homodimer. Interacts with endogenous GvpD, also with GvpD from H.mediterranei.

It is found in the cytoplasm. Degraded once GvpD is translated; degradation requires 'Arg-494' of GvpD; tested in transgenic H.volcanii. Fusion of green fluorescent protein to its C-terminus partially protects it from degradation. Its function is as follows. Plays a regulatory role in gas vesicle synthesis, required to activate transcription of the c-gvpA operon. Gas vesicles are hollow, gas filled proteinaceous nanostructures found in several microbial planktonic microorganisms. They allow positioning of halobacteria at the optimal depth for growth in the poorly aerated, shallow brine pools of their habitat. Functionally, expression of 2 c-vac DNA fragments containing 2 divergently transcribed regions (gvpE-gvpF-gvpG-gvpH-gvpI-gvpJ-gvpK-gvpL-gvpM and gvpA-gvpC-gvpN-gvpO) allows H.volcanii to produce gas vesicles. All site-directed mutagenesis is tested in H.volcanii. The polypeptide is Transcriptional activator GvpE2 (Halobacterium salinarum (strain ATCC 700922 / JCM 11081 / NRC-1) (Halobacterium halobium)).